The chain runs to 413 residues: Tryptophan synthase beta chain (413 aa).

An N6-(pyridoxal phosphate)lysine modification is found at Lys-107.

Belongs to the TrpB family. In terms of assembly, tetramer of two alpha and two beta chains. It depends on pyridoxal 5'-phosphate as a cofactor.

It carries out the reaction (1S,2R)-1-C-(indol-3-yl)glycerol 3-phosphate + L-serine = D-glyceraldehyde 3-phosphate + L-tryptophan + H2O. The protein operates within amino-acid biosynthesis; L-tryptophan biosynthesis; L-tryptophan from chorismate: step 5/5. The beta subunit is responsible for the synthesis of L-tryptophan from indole and L-serine. This is Tryptophan synthase beta chain from Trichormus variabilis (strain ATCC 29413 / PCC 7937) (Anabaena variabilis).